The primary structure comprises 481 residues: Exodeoxyribonuclease I (481 aa).

The region spanning 12–193 (LFYDYETFGK…SSDVYATMNI (182 aa)) is the Exonuclease domain. The Mg(2+) site is built by aspartate 15, glutamate 17, and aspartate 186. Position 17 (glutamate 17) interacts with substrate. Positions 202 to 350 (PKLFNFFFKY…KLKKFLCSIA (149 aa)) constitute an ExoI SH3-like domain. Residues 356-471 (NGSNVDLKMY…ELFEYVKYTR (116 aa)) enclose the ExoI C-terminal domain.

In terms of assembly, monomer. Interacts with ssb (via C-terminus); this interaction stimulates the exonuclease activity by recruiting the enzyme to its substrate. Mg(2+) is required as a cofactor.

The enzyme catalyses Exonucleolytic cleavage in the 3'- to 5'-direction to yield nucleoside 5'-phosphates.. In terms of biological role, degrades single-stranded DNA (ssDNA) in a highly processive manner. Also functions as a DNA deoxyribophosphodiesterase that releases deoxyribose-phosphate moieties following the cleavage of DNA at an apurinic/apyrimidinic (AP) site by either an AP endonuclease or AP lyase. The sequence is that of Exodeoxyribonuclease I (sbcB) from Buchnera aphidicola subsp. Baizongia pistaciae (strain Bp).